Reading from the N-terminus, the 124-residue chain is Small ribosomal subunit protein uS12 (124 aa).

The segment at 105 to 124 (QGVKNRKQARSRYGAKKEKG) is disordered. Positions 108–118 (KNRKQARSRYG) are enriched in basic residues.

This sequence belongs to the universal ribosomal protein uS12 family. Part of the 30S ribosomal subunit. Contacts proteins S8 and S17. May interact with IF1 in the 30S initiation complex.

Functionally, with S4 and S5 plays an important role in translational accuracy. In terms of biological role, interacts with and stabilizes bases of the 16S rRNA that are involved in tRNA selection in the A site and with the mRNA backbone. Located at the interface of the 30S and 50S subunits, it traverses the body of the 30S subunit contacting proteins on the other side and probably holding the rRNA structure together. The combined cluster of proteins S8, S12 and S17 appears to hold together the shoulder and platform of the 30S subunit. The protein is Small ribosomal subunit protein uS12 (rpsL) of Mycobacterium bovis (strain ATCC BAA-935 / AF2122/97).